A 111-amino-acid polypeptide reads, in one-letter code: Nucleoid-associated protein PputW619_3586 (111 aa).

Residues 87–111 (EQSSQEKMGGMTAGMQLPPGFKMPF) form a disordered region.

The protein belongs to the YbaB/EbfC family. In terms of assembly, homodimer.

The protein localises to the cytoplasm. The protein resides in the nucleoid. Functionally, binds to DNA and alters its conformation. May be involved in regulation of gene expression, nucleoid organization and DNA protection. This is Nucleoid-associated protein PputW619_3586 from Pseudomonas putida (strain W619).